A 2131-amino-acid chain; its full sequence is Beta/gamma crystallin domain-containing protein 1 (2131 aa).

Disordered regions lie at residues M1–P53, K104–A370, T385–K674, R688–S707, and A723–L743. Basic residues predominate over residues P19–Q35. Polar residues predominate over residues R135–K147. 2 stretches are compositionally biased toward basic and acidic residues: residues L160–R169 and G184–E194. Residues A248–Q265 are compositionally biased toward polar residues. The segment covering S414 to S424 has biased composition (basic residues). Low complexity predominate over residues A479–P490. 2 positions are modified to phosphoserine: S483 and S489. Basic and acidic residues-rich tracts occupy residues P536–P546 and E562–P572. Over residues R609 to A619 the composition is skewed to low complexity. The span at A723–V733 shows a compositional bias: basic and acidic residues. Phosphoserine is present on residues S737 and S756. Disordered stretches follow at residues E758 to T791 and D837 to C889. Over residues G769 to N782 the composition is skewed to polar residues. Residues S864–P881 are compositionally biased toward low complexity. S892 is modified (phosphoserine). Disordered regions lie at residues L926 to S947, Q1041 to S1101, S1271 to N1302, and S1316 to N1348. Residue T933 is modified to Phosphothreonine. Residues S1055–N1089 show a composition bias toward polar residues. Composition is skewed to low complexity over residues S1091–S1101, S1271–T1288, and S1316–P1327. The span at S1328 to N1348 shows a compositional bias: basic and acidic residues. Beta/gamma crystallin 'Greek key' domains follow at residues G1430 to R1469, G1470 to V1525, S1531 to W1571, G1572 to K1614, P1626 to R1678, G1679 to L1721, A1727 to S1769, G1770 to C1812, N1823 to G1860, G1861 to D1904, P1910 to G1950, and G1951 to V1992. In terms of domain architecture, Ricin B-type lectin spans K1994 to M2127.

Belongs to the beta/gamma-crystallin family.

Functionally, may function as suppressor of malignant melanoma. It may exert its effects through interactions with the cytoskeleton. The chain is Beta/gamma crystallin domain-containing protein 1 from Homo sapiens (Human).